A 64-amino-acid polypeptide reads, in one-letter code: Ribosome biogenesis protein Nop10 (64 aa).

Belongs to the NOP10 family.

Involved in ribosome biogenesis; more specifically in 18S rRNA pseudouridylation and in cleavage of pre-rRNA. The polypeptide is Ribosome biogenesis protein Nop10 (Ignicoccus hospitalis (strain KIN4/I / DSM 18386 / JCM 14125)).